Reading from the N-terminus, the 648-residue chain is ATP-dependent zinc metalloprotease FtsH 4 (648 aa).

Residues 1–6 (MKQSHK) are Cytoplasmic-facing. The chain crosses the membrane as a helical span at residues 7–27 (TLLLWVLLIMMFLAIWQFLSP). Residues 28–111 (DSRPATQVAF…VFFEKEDTSP (84 aa)) are Periplasmic-facing. The helical transmembrane segment at 112-132 (FWPGAIMYLLPTVFLLVMFYL) threads the bilayer. The Cytoplasmic segment spans residues 133–648 (FMRQLQAGGG…FGTPKPAPST (516 aa)). Position 205–212 (205–212 (GPPGTGKT)) interacts with ATP. His427 contributes to the Zn(2+) binding site. Residue Glu428 is part of the active site. Zn(2+) is bound by residues His431 and Asp504. Residues 622-648 (YSDRDRAAKEKRRAASIFGTPKPAPST) are disordered.

In the central section; belongs to the AAA ATPase family. It in the C-terminal section; belongs to the peptidase M41 family. As to quaternary structure, homohexamer. It depends on Zn(2+) as a cofactor.

The protein localises to the cell inner membrane. Acts as a processive, ATP-dependent zinc metallopeptidase for both cytoplasmic and membrane proteins. Plays a role in the quality control of integral membrane proteins. The polypeptide is ATP-dependent zinc metalloprotease FtsH 4 (Sorangium cellulosum (strain So ce56) (Polyangium cellulosum (strain So ce56))).